Here is a 96-residue protein sequence, read N- to C-terminus: Protein RnfH (96 aa).

Belongs to the UPF0125 (RnfH) family.

The polypeptide is Protein RnfH (Citrobacter koseri (strain ATCC BAA-895 / CDC 4225-83 / SGSC4696)).